The following is a 2048-amino-acid chain: Myoferlin (2048 aa).

The region spanning 1–101 (MLRVIVESAT…IGDQNRSLPY (101 aa)) is the C2 1 domain. Residues 1 to 2012 (MLRVIVESAT…MRFIVWRRFK (2012 aa)) lie on the Cytoplasmic side of the membrane. The disordered stretch occupies residues 124–176 (YTPPSAPHPNDPSGTSVPGMGEEEEEDQGDEDRVDGIVRGPGPKGPSGTVSEA). Acidic residues predominate over residues 144 to 156 (GEEEEEDQGDEDR). Phosphoserine is present on residues S170 and S174. C2 domains are found at residues 183–300 (TKGK…RKWL) and 339–475 (DSDD…EATT). Residues 186-281 (KSSRRMLSNK…RADCLMGEFK (96 aa)) form a necessary for interaction with EHD2 region. Residues D390, D396, D444, D446, and D452 each coordinate Ca(2+). Residues K540 and K871 each carry the N6-acetyllysine modification. C2 domains follow at residues 1110–1238 (GANT…LLWH) and 1269–1397 (LPSQ…GKED). Ca(2+) is bound by residues D1142, D1148, D1204, and D1206. K1494 carries the N6-acetyllysine modification. 2 consecutive C2 domains span residues 1523–1641 (PAPP…SHCG) and 1759–1907 (GPPG…EKCS). Ca(2+) is bound by residues D1556, D1562, D1611, D1613, D1878, S1881, and D1884. Positions 1964-1975 (EADERPAGKGRS) are enriched in basic and acidic residues. The disordered stretch occupies residues 1964–1986 (EADERPAGKGRSEPNMNPKLDPP). A helical transmembrane segment spans residues 2013-2033 (WVIIGLLLLLILLLFVAVLLY). Residues 2034–2048 (SLPNYLSMKIVRPNA) are Extracellular-facing.

It belongs to the ferlin family. As to quaternary structure, interacts with EHD1. Interacts with EHD2; the interaction is direct. Interacts with DNM2 and KDR. Interacts with RIPOR2. Ca(2+) serves as cofactor. In terms of tissue distribution, expressed in myoblasts (at protein level). Expressed in endothelial cells.

The protein localises to the cell membrane. It localises to the nucleus membrane. Its subcellular location is the cytoplasmic vesicle membrane. Functionally, calcium/phospholipid-binding protein that plays a role in the plasmalemma repair mechanism of endothelial cells that permits rapid resealing of membranes disrupted by mechanical stress. Involved in endocytic recycling. Implicated in VEGF signal transduction by regulating the levels of the receptor KDR. The chain is Myoferlin (Myof) from Mus musculus (Mouse).